We begin with the raw amino-acid sequence, 416 residues long: Phosphoglycerate kinase (416 aa).

Residues V23, D24, F25, N26, Q38, R39, S62, H63, G65, R66, L121, R122, H168, and R169 each contribute to the (2R)-3-phosphoglycerate site. An ADP-binding site is contributed by G212. CDP is bound at residue G212. AMP is bound by residues A213 and K214. An ATP-binding site is contributed by A213. A213 is a binding site for Mg(2+). Positions 216 and 217 each coordinate Mg(2+). Residue D217 coordinates CDP. K218 contributes to the AMP binding site. An ATP-binding site is contributed by K218. An ADP-binding site is contributed by G236. Residue G236 participates in CDP binding. 2 residues coordinate AMP: G237 and G311. The ATP site is built by G237 and G311. CDP-binding residues include G336 and F341. F341 serves as a coordination point for ADP. E342 contributes to the AMP binding site. 3 residues coordinate ATP: E342, D373, and T374. A Mg(2+)-binding site is contributed by D373.

It belongs to the phosphoglycerate kinase family. Monomer. It depends on Mg(2+) as a cofactor.

It is found in the cytoplasm. Its subcellular location is the mitochondrion. The enzyme catalyses (2R)-3-phosphoglycerate + ATP = (2R)-3-phospho-glyceroyl phosphate + ADP. It functions in the pathway carbohydrate degradation; glycolysis; pyruvate from D-glyceraldehyde 3-phosphate: step 2/5. In terms of biological role, catalyzes one of the two ATP producing reactions in the glycolytic pathway via the reversible conversion of 1,3-diphosphoglycerate to 3-phosphoglycerate. Both L- and D- forms of purine and pyrimidine nucleotides can be used as substrates, but the activity is much lower on pyrimidines. Negatively regulates the biosynthesis of acetyl-CoA from pyruvate in the mitochondrion. The protein is Phosphoglycerate kinase (PGK1) of Candida glabrata (strain ATCC 2001 / BCRC 20586 / JCM 3761 / NBRC 0622 / NRRL Y-65 / CBS 138) (Yeast).